A 157-amino-acid polypeptide reads, in one-letter code: Phosphopantetheine adenylyltransferase (157 aa).

Thr10 serves as a coordination point for substrate. Residues 10-11 (TF) and His18 each bind ATP. Substrate-binding residues include Lys42, Leu74, and Arg88. ATP-binding positions include 89–91 (GLR), Glu99, and 124–130 (NAFISSS).

It belongs to the bacterial CoaD family. In terms of assembly, homohexamer. Mg(2+) is required as a cofactor.

Its subcellular location is the cytoplasm. It carries out the reaction (R)-4'-phosphopantetheine + ATP + H(+) = 3'-dephospho-CoA + diphosphate. It participates in cofactor biosynthesis; coenzyme A biosynthesis; CoA from (R)-pantothenate: step 4/5. Functionally, reversibly transfers an adenylyl group from ATP to 4'-phosphopantetheine, yielding dephospho-CoA (dPCoA) and pyrophosphate. In Helicobacter pylori (strain Shi470), this protein is Phosphopantetheine adenylyltransferase.